A 2000-amino-acid chain; its full sequence is Sodium channel protein type 3 subunit alpha (2000 aa).

Topologically, residues 1-128 are cytoplasmic; the sequence is MAQALLVPPG…KIAIKILVHS (128 aa). Positions 28–60 are disordered; the sequence is RAAEEKAKKPKKEQDNDDENKPKPNSDLEAGKN. A compositionally biased stretch (basic and acidic residues) spans 46–57; it reads ENKPKPNSDLEA. An I repeat occupies 110–455; that stretch reads ILTPLNPVRK…QQMLEQLKKQ (346 aa). The chain crosses the membrane as a helical span at residues 129–146; the sequence is LFSMLIMCTILTNCVFMT. Residues 147-152 are Extracellular-facing; it reads LSNPPD. Residues 153–174 form a helical membrane-spanning segment; the sequence is WTKNVEYTFTGIYTFESLIKIL. Topologically, residues 175-188 are cytoplasmic; it reads ARGFCLEDFTFLRD. A helical membrane pass occupies residues 189-206; that stretch reads PWNWLDFSVIVMAYVTEF. Residues 207 to 213 lie on the Extracellular side of the membrane; that stretch reads VSLGNVS. N-linked (GlcNAc...) asparagine glycosylation is present at Asn211. The helical transmembrane segment at 214-235 threads the bilayer; it reads ALRTFRVLRALKTISVIPGLKT. Residues 236-249 lie on the Cytoplasmic side of the membrane; sequence IVGALIQSVKKLSD. A helical membrane pass occupies residues 250–269; it reads VMILTVFCLSVFALIGLQLF. At 270 to 369 the chain is on the extracellular side; sequence MGNLRNKCLQ…NYGYTSFDTF (100 aa). N-linked (GlcNAc...) asparagine glycosylation is found at Asn290, Asn296, Asn302, Asn307, and Asn339. The segment at residues 370-386 is an intramembrane region (pore-forming); sequence SWAFLSLFRLMTQDYWE. At 387–397 the chain is on the extracellular side; sequence NLYQLTLRAAG. A helical membrane pass occupies residues 398-424; that stretch reads KTYMIFFVLVIFLGSFYLVNLILAVVA. Over 425–761 the chain is Cytoplasmic; sequence MAYEEQNQAT…LVNLIVMDPF (337 aa). A phosphoserine mark is found at Ser484, Ser485, and Ser486. Disordered regions lie at residues 493–528, 587–631, and 662–681; these read SKSA…KSES, VGSE…ASMS, and ALTS…ETEV. The segment covering 500–509 has biased composition (basic residues); it reads RNRRKKRRQR. 2 stretches are compositionally biased toward basic and acidic residues: residues 510–528 and 596–610; these read EHLE…KSES and DEHS…RRDS. Over residues 662–678 the composition is skewed to polar residues; it reads ALTSPTGQLPPEGTTTE. Residues 742-1014 form an II repeat; sequence CCDAWLKVKH…QIAVGRMQKG (273 aa). The chain crosses the membrane as a helical span at residues 762–779; that stretch reads VDLAITICIVLNTLFMAM. The Extracellular segment spans residues 780-787; that stretch reads EHYPMTEQ. A helical membrane pass occupies residues 788 to 812; sequence FSSVLTVGNLVFTGIFTAEMVLKII. At 813–822 the chain is on the cytoplasmic side; sequence AMDPYYYFQE. The chain crosses the membrane as a helical span at residues 823–842; it reads GWNIFDGIIVSLSLMELGLS. Residues 843-846 are Extracellular-facing; that stretch reads NVEG. The helical transmembrane segment at 847–865 threads the bilayer; the sequence is LSVLRSFRLLRVFKLAKSW. Residues 866-883 are Cytoplasmic-facing; the sequence is PTLNMLIKIIGNSVGALG. The helical transmembrane segment at 884–904 threads the bilayer; it reads NLTLVLAIIVFIFAVVGMQLF. Over 905–929 the chain is Extracellular; the sequence is GKSYKECVCKINDDCTLPRWHMNDF. Cys913 and Cys919 form a disulfide bridge. Positions 930–945 form an intramembrane region, pore-forming; it reads FHSFLIVFRVLCGEWI. The Extracellular segment spans residues 946 to 956; that stretch reads ETMWDCMEVAG. Cys951 and Cys960 form a disulfide bridge. A helical transmembrane segment spans residues 957–983; sequence QTMCLIVFMLVMVIGNLVVLNLFLALL. Residues 984-1205 are Cytoplasmic-facing; the sequence is LSSFSSDNLA…RKTCYSIVEH (222 aa). The disordered stretch occupies residues 1118-1162; the sequence is EEFSSESELEESKEKLNATSSSEGSTVDVVLPREGEQAETEPEED. One copy of the III repeat lies at 1188–1499; that stretch reads KGKIWWNLRK…KKYYNAMKKL (312 aa). Residues 1206 to 1226 traverse the membrane as a helical segment; that stretch reads NWFETFIVFMILLSSGALAFE. Topologically, residues 1227 to 1238 are extracellular; sequence DIYIEQRKTIKT. The chain crosses the membrane as a helical span at residues 1239–1260; the sequence is MLEYADKVFTYIFILEMLLKWV. Over 1261–1266 the chain is Cytoplasmic; it reads AYGFQT. The chain crosses the membrane as a helical span at residues 1267-1292; the sequence is YFTNAWCWLDFLIVDVSLVSLVANAL. Residues 1293–1301 lie on the Extracellular side of the membrane; that stretch reads GYSELGAIK. Residues 1302–1320 form a helical membrane-spanning segment; the sequence is SLRTLRALRPLRALSRFEG. At 1321–1333 the chain is on the cytoplasmic side; it reads MRVVVNALVGAIP. A helical membrane pass occupies residues 1334 to 1356; that stretch reads SIMNVLLVCLIFWLIFSIMGVNL. The Extracellular portion of the chain corresponds to 1357 to 1402; sequence FAGKFYHCVNMTTGNMFDISDVNNLSDCQALGKQARWKNVKVNFDN. The cysteines at positions 1364 and 1384 are disulfide-linked. Residues Asn1366 and Asn1380 are each glycosylated (N-linked (GlcNAc...) asparagine). Positions 1403–1419 form an intramembrane region, pore-forming; it reads VGAGYLALLQVATFKGW. The Extracellular segment spans residues 1420 to 1442; sequence MDIMYAAVDSRDVKLQPVYEENL. Residues 1443–1468 form a helical membrane-spanning segment; that stretch reads YMYLYFVIFIIFGSFFTLNLFIGVII. At 1469–1526 the chain is on the cytoplasmic side; sequence DNFNQQKKKFGGQDIFMTEEQKKYYNAMKKLGSKKPQKPIPRPANKFQGMVFDFVTRQ. The residue at position 1501 (Ser1501) is a Phosphoserine; by PKC. Residues 1508–1806 form an IV repeat; sequence IPRPANKFQG…WEKFDPDATQ (299 aa). The helical transmembrane segment at 1527 to 1545 threads the bilayer; it reads VFDISIMILICLNMVTMMV. Topologically, residues 1546-1553 are extracellular; the sequence is ETDDQGKY. The chain crosses the membrane as a helical span at residues 1554 to 1577; sequence MTLVLSRINLVFIVLFTGEFVLKL. The Cytoplasmic segment spans residues 1578–1587; the sequence is VSLRHYYFTI. Residues 1588 to 1605 traverse the membrane as a helical segment; it reads GWNIFDFVVVILSIVGMF. At 1606–1617 the chain is on the extracellular side; it reads LAEMIEKYFVSP. A helical transmembrane segment spans residues 1618 to 1640; the sequence is TLFRVIRLARIGRILRLIKGAKG. The Cytoplasmic portion of the chain corresponds to 1641–1653; that stretch reads IRTLLFALMMSLP. Residues 1654 to 1677 traverse the membrane as a helical segment; that stretch reads ALFNIGLLLFLVMFIYAIFGMSNF. The Extracellular segment spans residues 1678–1699; that stretch reads AYVKKEAGIDDMFNFETFGNSM. The pore-forming intramembrane region spans 1700 to 1712; sequence ICLFQITTSAGWD. The Extracellular portion of the chain corresponds to 1713-1744; it reads GLLAPILNSAPPDCDPDTIHPGSSVKGDCGNP. Residues 1745–1770 traverse the membrane as a helical segment; the sequence is SVGIFFFVSYIIISFLVVVNMYIAVI. Residues 1771–2000 are Cytoplasmic-facing; it reads LENFSVATEE…KGKEVRENQK (230 aa). Residues 1900 to 1929 enclose the IQ domain; the sequence is EEVSAAIIQRNFRCYLLKQRLKNISSNYNK. The disordered stretch occupies residues 1949 to 2000; that stretch reads LNGNSTPEKTDGSSSTTSPPSYDSVTKPDKEKFEKDKPEKESKGKEVRENQK. Over residues 1974–2000 the composition is skewed to basic and acidic residues; that stretch reads TKPDKEKFEKDKPEKESKGKEVRENQK.

Belongs to the sodium channel (TC 1.A.1.10) family. Nav1.3/SCN3A subfamily. In terms of assembly, heterooligomer of an alpha subunit, SCN3A, and 1 to 3 regulatory beta subunits including SCN1B and SCN2B; disulfide-linked with some beta subunits like SCN2B. Interacts with NEDD4L; could regulate expression of SCN3A at the plasma membrane through ubiquitination-regulated endocytosis. Interacts with the conotoxin GVIIJ. Post-translationally, may be ubiquitinated by NEDD4L; which would promote its endocytosis. Phosphorylation at Ser-1501 by PKC in a highly conserved cytoplasmic loop slows inactivation of the sodium channel and reduces peak sodium currents. As to expression, expressed in enterochromaffin cells in both colon and small bowel (at protein level).

The protein resides in the cell membrane. It is found in the basal cell membrane. It catalyses the reaction Na(+)(in) = Na(+)(out). In terms of biological role, pore-forming subunit of Nav1.3, a voltage-gated sodium (Nav) channel that directly mediates the depolarizing phase of action potentials in excitable membranes. Navs, also called VGSCs (voltage-gated sodium channels) or VDSCs (voltage-dependent sodium channels), operate by switching between closed and open conformations depending on the voltage difference across the membrane. In the open conformation they allow Na(+) ions to selectively pass through the pore, along their electrochemical gradient. The influx of Na+ ions provokes membrane depolarization, initiating the propagation of electrical signals throughout cells and tissues. In some secretory cell types, it also participates in cell excitability through membrane depolarization and regulates cells responsiveness to stimuli triggering secretion. For instance, it controls the release of serotonin/5-hydroxytryptamine by enterochromaffin cells and is required for both glucagon- and glucose-induced insulin secretion in pancreatic endocrine cells. The chain is Sodium channel protein type 3 subunit alpha from Homo sapiens (Human).